The sequence spans 293 residues: Beta-porphyranase B (293 aa).

An N-terminal signal peptide occupies residues 1 to 21 (MKLSNQFLITITLLITSITFA). Positions 38–291 (QEWKLIENMS…WVRSWQLVDS (254 aa)) constitute a GH16 domain. W67, R70, E156, E161, and E256 together coordinate substrate. The active-site Nucleophile is the E156. Residue E161 is the Proton donor of the active site.

This sequence belongs to the glycosyl hydrolase 16 family.

It is found in the periplasm. The catalysed reaction is Hydrolysis of beta-D-galactopyranose-(1-&gt;4)-alpha-L-galactopyranose-6-sulfate linkages in porphyran.. In terms of biological role, cleaves the sulfated polysaccharide porphyran at the (1-&gt;4) linkages between beta-D-galactopyranose and alpha-L-galactopyranose-6-sulfate, forming mostly the disaccharide alpha-L-galactopyranose-6-sulfate-(1-&gt;3)-beta-D-galactose. Some longer oligosaccharides of even number of residues are also observed. Inactive on the non-sulfated agarose portion of the porphyran backbone. In contrast to PorA, tolerates the presence of 3-6-anhydro-L-galactose in subsite -2. The protein is Beta-porphyranase B (porB) of Zobellia galactanivorans (strain DSM 12802 / CCUG 47099 / CIP 106680 / NCIMB 13871 / Dsij).